Consider the following 448-residue polypeptide: MQVPKNNIYTVSRLNGEVRQILEGQLGKVWLNGEISNFSAPSSGHWYLTLKDHYSQIRCAMFKGRNQSVSFKPVNGQQVLVKGAISVYEPRGDYQLLIESMLPAGDGLLAQQFEALKMKLAAQGLFAADTKRQLPKNIQRIGVITSPTGAAIRDVLHVLARRDPSIEVIIYPTQVQGENADMNICQAINIANQRLEVDVLLLTRGGGSLEDLWCFNSEALAHTIYNSALPVVSAVGHEVDTTISDYVADVRAPTPSAGAELLSQDSDNKSQRLATVLSRLKQSASHYQLKQEKRLSLLEHRLQRLDPKRTLQQFEQRFDEMQLRLEAALSNKLHGLSRRQQQLANRLEQQSPKHKLALETNRLSYLATRLQDAMQDTLNQSEQRITYAAHQLETVSPLATLSRGYSITTDANNQVIDNAAQLSVGDKINTRLRHGQVQSTVTQITDES.

Belongs to the XseA family. Heterooligomer composed of large and small subunits.

It is found in the cytoplasm. It carries out the reaction Exonucleolytic cleavage in either 5'- to 3'- or 3'- to 5'-direction to yield nucleoside 5'-phosphates.. Bidirectionally degrades single-stranded DNA into large acid-insoluble oligonucleotides, which are then degraded further into small acid-soluble oligonucleotides. This is Exodeoxyribonuclease 7 large subunit from Shewanella sp. (strain ANA-3).